The primary structure comprises 382 residues: Pyruvate dehydrogenase E1 component subunit beta, mitochondrial (382 aa).

Residues 1–46 constitute a mitochondrion transit peptide; the sequence is MSRFLRPAFRLATTATRASTIRPTPSSLITKAAAVPTTRLLQKRSY. Thiamine diphosphate is bound at residue E112. K(+) is bound by residues I165, A213, I214, D216, and N218.

In terms of assembly, eukaryotic pyruvate dehydrogenase (PDH) complexes are organized as a core consisting of the oligomeric dihydrolipoamide acetyl-transferase (E2), around which are arranged multiple copies of pyruvate dehydrogenase (E1), dihydrolipoamide dehydrogenase (E3) and protein X (E3BP) bound by non-covalent bonds. The Chaetomium thermophilum PDH complex contains 60 E2 units, 12 E3BP units, about 20 E1 units, and 12 or more E3 units. The units are organized in 1 E2 60-mer, 4 E3BP trimers, about 20 E1 tetramers, and a maximum of 12 E3 dimers. Pyruvate dehydrogenase (E1) is active as a tetramer of 2 alpha and 2 beta subunits. The E3BP trimers are bound inside the icosahedral core with tetrahedral symmetry. Thiamine diphosphate is required as a cofactor.

The protein localises to the mitochondrion. It catalyses the reaction N(6)-[(R)-lipoyl]-L-lysyl-[protein] + pyruvate + H(+) = N(6)-[(R)-S(8)-acetyldihydrolipoyl]-L-lysyl-[protein] + CO2. The 10-megadalton pyruvate dehydrogenase complex contains multiple copies of three enzymatic components: pyruvate dehydrogenase (E1), dihydrolipoamide acetyltransferase (E2) and lipoamide dehydrogenase (E3) and catalyzes the overall oxidative decarboxylation of pyruvate to form acetyl-CoA and CO(2). Within the complex, pyruvate and thiamine pyrophosphate (TPP or vitamin B1) are bound by pyruvate dehydrogenase E1 subunits alpha and beta and pyruvate is decarboxylated leading to the 2-carbon hydrohyethyl bound to TPP. The E2 component contains covalently-bound lipoyl cofactors and transfers the hydroxyethyl group from TPP to an oxidized form of covalently bound lipoamide, and the resulting acetyl group is then transferred to free coenzyme A to form acetyl-CoA and reduced dihydrolipoamide-E2. Finally, the flavoprotein dihydrolipoamide dehydrogenase (E3) re-oxidizes the lipoyl group of dihydrolipoamide-E2 to form lipoamide-E2 and NADH. A fourth subunit, E3BP, is responsible for tethering E3 in proximity to the core, forming the entire metabolon. The chain is Pyruvate dehydrogenase E1 component subunit beta, mitochondrial from Chaetomium thermophilum (strain DSM 1495 / CBS 144.50 / IMI 039719) (Thermochaetoides thermophila).